A 134-amino-acid chain; its full sequence is STAG3-like protein 3 (134 aa).

Residues 10 to 95 (PKVTCRDVLP…GCFKDWMVSM (86 aa)) enclose the SCD domain.

Belongs to the SCC3 family.

The protein localises to the nucleus. The protein is STAG3-like protein 3 (STAG3L3) of Homo sapiens (Human).